We begin with the raw amino-acid sequence, 611 residues long: Polyphenol oxidase 4 (611 aa).

6 residues coordinate Cu cation: H57, H82, H91, H251, H255, and H283. Residues 80–82 (CTH) constitute a cross-link (2'-(S-cysteinyl)-histidine (Cys-His)). H255 provides a ligand contact to substrate. The propeptide at 380-611 (IKKSEGGKNP…GGLGALGRIF (232 aa)) is removed in mature form.

It belongs to the tyrosinase family. In terms of assembly, heterotetramer. Cu(2+) serves as cofactor. Post-translationally, the C-ter is probably cleaved after Gly-379 since the mature active protein is smaller than the protein encoded by the gene.

The enzyme catalyses 2 L-dopa + O2 = 2 L-dopaquinone + 2 H2O. It carries out the reaction L-tyrosine + O2 = L-dopaquinone + H2O. In terms of biological role, copper-containing oxidase that catalyzes both the o-hydroxylation of monophenols and the subsequent oxidation of the resulting o-diphenols into reactive o-quinones, which evolve spontaneously to produce intermediates, which associate in dark brown pigments. Involved in the initial step of melanin synthesis. Melanins constitute a mechanism of defense and resistance to stress such as UV radiations, free radicals, gamma rays, dehydratation and extreme temperatures, and contribute to the fungal cell-wall resistance against hydrolytic enzymes in avoiding cellular lysis. Fungal pigments are also involved in the formation and stability of spores. The protein is Polyphenol oxidase 4 (PPO4) of Agaricus bisporus (White button mushroom).